The sequence spans 29 residues: Cytochrome b6-f complex subunit 8 (29 aa).

A helical transmembrane segment spans residues 3-23 (IVSLGWAFLMVVFSFSLSLVV).

The protein belongs to the PetN family. In terms of assembly, the 4 large subunits of the cytochrome b6-f complex are cytochrome b6, subunit IV (17 kDa polypeptide, PetD), cytochrome f and the Rieske protein, while the 4 small subunits are PetG, PetL, PetM and PetN. The complex functions as a dimer.

The protein resides in the plastid. Its subcellular location is the chloroplast thylakoid membrane. Functionally, component of the cytochrome b6-f complex, which mediates electron transfer between photosystem II (PSII) and photosystem I (PSI), cyclic electron flow around PSI, and state transitions. In Chlorokybus atmophyticus (Soil alga), this protein is Cytochrome b6-f complex subunit 8.